Consider the following 152-residue polypeptide: Transcriptional regulator MraZ (152 aa).

2 SpoVT-AbrB domains span residues Ala-5 to Glu-52 and Ala-81 to Ala-124.

This sequence belongs to the MraZ family. In terms of assembly, forms oligomers.

It localises to the cytoplasm. The protein resides in the nucleoid. The sequence is that of Transcriptional regulator MraZ from Shewanella putrefaciens (strain CN-32 / ATCC BAA-453).